A 687-amino-acid chain; its full sequence is Ataxin-1-like (687 aa).

Basic and acidic residues predominate over residues 1–19; that stretch reads MKPVHERSQECLPPKKRDL. Disordered regions lie at residues 1–46, 185–223, and 261–294; these read MKPV…SEWS, ATPP…LDLA, and SALE…KGES. Residues 20 to 197 are interaction with NCOR2 and ATXN1; sequence PVTSEDMGRT…PPQAASPAQS (178 aa). The self-association stretch occupies residues 20 to 197; sequence PVTSEDMGRT…PPQAASPAQS (178 aa). Composition is skewed to polar residues over residues 28-43 and 198-219; these read RTTS…SDAS and FNKS…NTQP. Over residues 272–283 the composition is skewed to basic and acidic residues; it reads RQRERNVRRESE. Ser-282 is subject to Phosphoserine. Position 328 is a phosphothreonine (Thr-328). The disordered stretch occupies residues 356–379; the sequence is DEPSPLNLSHHNLDHQGEGRGSAR. Phosphoserine is present on Ser-359. Positions 455-586 constitute an AXH domain; that stretch reads PPPVTSSHLP…SISLQSLNSN (132 aa). Residues 587–649 are disordered; the sequence is SVSQASCAPP…PGAQACWPAP (63 aa).

It belongs to the ATXN1 family. In terms of assembly, homodimer. Interacts (via AXH domain) with NCOR2. Interacts with ATXN1 and CIC. Directly interacts with RBPJ; this interaction is disrupted in the presence of Notch intracellular domain. Competes with ATXN1 for RBPJ-binding. Found in a complex with CIC and ATXN1. As to expression, expressed in the cortex and hypothalamus (at protein level). Expressed in neuronal cells. Highly expressed in Purkinje cells of cerebellum.

It is found in the nucleus. The protein resides in the cell projection. Its subcellular location is the dendrite. Functionally, chromatin-binding factor that repress Notch signaling in the absence of Notch intracellular domain by acting as a CBF1 corepressor. Binds to the HEY promoter and might assist, along with NCOR2, RBPJ-mediated repression. Can suppress the cytotoxicity of ATXN1 in spinocerebellar ataxia type 1 (SCA1). In concert with CIC and ATXN1, involved in brain development. The polypeptide is Ataxin-1-like (Atxn1l) (Mus musculus (Mouse)).